Consider the following 200-residue polypeptide: Large ribosomal subunit protein uL4 (200 aa).

The tract at residues 38 to 72 is disordered; it reads GRQGSKQQKTRSDVSGGGKRPWRQKGTGRARAGTI.

It belongs to the universal ribosomal protein uL4 family. Part of the 50S ribosomal subunit.

In terms of biological role, one of the primary rRNA binding proteins, this protein initially binds near the 5'-end of the 23S rRNA. It is important during the early stages of 50S assembly. It makes multiple contacts with different domains of the 23S rRNA in the assembled 50S subunit and ribosome. Forms part of the polypeptide exit tunnel. The sequence is that of Large ribosomal subunit protein uL4 from Pseudomonas fluorescens (strain ATCC BAA-477 / NRRL B-23932 / Pf-5).